Reading from the N-terminus, the 206-residue chain is FMN-dependent NADH:quinone oxidoreductase 2 (206 aa).

Ser10 provides a ligand contact to FMN.

The protein belongs to the azoreductase type 1 family. Homodimer. The cofactor is FMN.

The enzyme catalyses 2 a quinone + NADH + H(+) = 2 a 1,4-benzosemiquinone + NAD(+). It carries out the reaction N,N-dimethyl-1,4-phenylenediamine + anthranilate + 2 NAD(+) = 2-(4-dimethylaminophenyl)diazenylbenzoate + 2 NADH + 2 H(+). Its function is as follows. Quinone reductase that provides resistance to thiol-specific stress caused by electrophilic quinones. Also exhibits azoreductase activity. Catalyzes the reductive cleavage of the azo bond in aromatic azo compounds to the corresponding amines. The sequence is that of FMN-dependent NADH:quinone oxidoreductase 2 from Rhizobium etli (strain ATCC 51251 / DSM 11541 / JCM 21823 / NBRC 15573 / CFN 42).